The chain runs to 123 residues: Small ribosomal subunit protein uS12 (123 aa).

Aspartate 89 bears the 3-methylthioaspartic acid mark.

Belongs to the universal ribosomal protein uS12 family. As to quaternary structure, part of the 30S ribosomal subunit. Contacts proteins S8 and S17. May interact with IF1 in the 30S initiation complex.

Functionally, with S4 and S5 plays an important role in translational accuracy. In terms of biological role, interacts with and stabilizes bases of the 16S rRNA that are involved in tRNA selection in the A site and with the mRNA backbone. Located at the interface of the 30S and 50S subunits, it traverses the body of the 30S subunit contacting proteins on the other side and probably holding the rRNA structure together. The combined cluster of proteins S8, S12 and S17 appears to hold together the shoulder and platform of the 30S subunit. The sequence is that of Small ribosomal subunit protein uS12 from Myxococcus xanthus.